The following is a 495-amino-acid chain: Glutamate--tRNA ligase (495 aa).

The short motif at 13–23 (PSPTGTPHVGL) is the 'HIGH' region element. The 'KMSKS' region motif lies at 257–261 (KLSKR). Position 260 (K260) interacts with ATP.

Belongs to the class-I aminoacyl-tRNA synthetase family. Glutamate--tRNA ligase type 1 subfamily. As to quaternary structure, monomer.

It is found in the cytoplasm. It catalyses the reaction tRNA(Glu) + L-glutamate + ATP = L-glutamyl-tRNA(Glu) + AMP + diphosphate. In terms of biological role, catalyzes the attachment of glutamate to tRNA(Glu) in a two-step reaction: glutamate is first activated by ATP to form Glu-AMP and then transferred to the acceptor end of tRNA(Glu). This chain is Glutamate--tRNA ligase, found in Mycolicibacterium vanbaalenii (strain DSM 7251 / JCM 13017 / BCRC 16820 / KCTC 9966 / NRRL B-24157 / PYR-1) (Mycobacterium vanbaalenii).